Here is a 178-residue protein sequence, read N- to C-terminus: Inner membrane-spanning protein YciB (178 aa).

The next 5 membrane-spanning stretches (helical) occupy residues 22–42 (IFVASGALIVASAIALAVSWL), 50–70 (MALFTFALVAIFGTLTIALHN), 76–96 (WKVTIIYGLFTLALLFSHWFM), 121–141 (IAWALFFLACGLANIYVAFWL), and 149–169 (FKVFGLSGLTLLFTLLSGIYI).

Belongs to the YciB family.

The protein resides in the cell inner membrane. Functionally, plays a role in cell envelope biogenesis, maintenance of cell envelope integrity and membrane homeostasis. The protein is Inner membrane-spanning protein YciB of Erwinia tasmaniensis (strain DSM 17950 / CFBP 7177 / CIP 109463 / NCPPB 4357 / Et1/99).